The sequence spans 471 residues: 3-isopropylmalate dehydratase large subunit (471 aa).

The [4Fe-4S] cluster site is built by Cys-349, Cys-409, and Cys-412.

It belongs to the aconitase/IPM isomerase family. LeuC type 1 subfamily. In terms of assembly, heterodimer of LeuC and LeuD. [4Fe-4S] cluster serves as cofactor.

The enzyme catalyses (2R,3S)-3-isopropylmalate = (2S)-2-isopropylmalate. The protein operates within amino-acid biosynthesis; L-leucine biosynthesis; L-leucine from 3-methyl-2-oxobutanoate: step 2/4. Its function is as follows. Catalyzes the isomerization between 2-isopropylmalate and 3-isopropylmalate, via the formation of 2-isopropylmaleate. The protein is 3-isopropylmalate dehydratase large subunit of Aliivibrio fischeri (strain MJ11) (Vibrio fischeri).